A 108-amino-acid chain; its full sequence is MDDMLIVTTNEVAGYRIVEVYGEVFGLTTRSRNLFSSAGQQMKTVVGGEINGYTKLQHDTRETSIGRMKEEAKAKGANAIVAMRFDSSTFQNIDSVAAYGTAVKIEKI.

It belongs to the UPF0145 family.

The sequence is that of UPF0145 protein LACR_1006 from Lactococcus lactis subsp. cremoris (strain SK11).